Here is a 447-residue protein sequence, read N- to C-terminus: Transcriptional enhancer factor TEF-4 (447 aa).

Disordered regions lie at residues methionine 1–serine 46 and threonine 183–tryptophan 218. Residues aspartate 11 to glutamate 20 show a composition bias toward low complexity. Over residues glutamate 25–aspartate 40 the composition is skewed to gly residues. The TEA DNA-binding region spans glycine 38–glutamate 114. The transcriptional activation stretch occupies residues tryptophan 172–aspartate 447. Over residues threonine 183 to serine 206 the composition is skewed to low complexity. Positions proline 207 to proline 216 are enriched in pro residues.

As to quaternary structure, interacts with YAP1 and WWTR1/TAZ.

It is found in the nucleus. In terms of biological role, transcription factor which plays a key role in the Hippo signaling pathway, a pathway involved in organ size control and tumor suppression by restricting proliferation and promoting apoptosis. The core of this pathway is composed of a kinase cascade wherein MST1/MST2, in complex with its regulatory protein SAV1, phosphorylates and activates LATS1/2 in complex with its regulatory protein MOB1, which in turn phosphorylates and inactivates YAP1 oncoprotein and WWTR1/TAZ. Acts by mediating gene expression of YAP1 and WWTR1/TAZ, thereby regulating cell proliferation, migration and epithelial mesenchymal transition (EMT) induction. Binds to the SPH and GT-IIC 'enhansons' (5'-GTGGAATGT-3'). May be involved in the gene regulation of neural development. Binds to the M-CAT motif. This is Transcriptional enhancer factor TEF-4 (TEAD2) from Homo sapiens (Human).